Here is a 349-residue protein sequence, read N- to C-terminus: sn-glycerol-3-phosphate import ATP-binding protein UgpC (349 aa).

Residues 4–235 enclose the ABC transporter domain; that stretch reads VTLTAVRKVY…PASTFVASFM (232 aa). 37–44 lines the ATP pocket; that stretch reads GPSGCGKS.

The protein belongs to the ABC transporter superfamily. sn-glycerol-3-phosphate importer (TC 3.A.1.1.3) family. As to quaternary structure, the complex is composed of two ATP-binding proteins (UgpC), two transmembrane proteins (UgpA and UgpE) and a solute-binding protein (UgpB).

The protein resides in the cell inner membrane. It catalyses the reaction sn-glycerol 3-phosphate(out) + ATP + H2O = sn-glycerol 3-phosphate(in) + ADP + phosphate + H(+). Its function is as follows. Part of the ABC transporter complex UgpBAEC involved in sn-glycerol-3-phosphate (G3P) import. Responsible for energy coupling to the transport system. This chain is sn-glycerol-3-phosphate import ATP-binding protein UgpC, found in Jannaschia sp. (strain CCS1).